The following is a 244-amino-acid chain: Probable 2-phosphosulfolactate phosphatase (244 aa).

Belongs to the ComB family. It depends on Mg(2+) as a cofactor.

It catalyses the reaction (2R)-O-phospho-3-sulfolactate + H2O = (2R)-3-sulfolactate + phosphate. The protein is Probable 2-phosphosulfolactate phosphatase of Thermosynechococcus vestitus (strain NIES-2133 / IAM M-273 / BP-1).